We begin with the raw amino-acid sequence, 162 residues long: 6,7-dimethyl-8-ribityllumazine synthase (162 aa).

Residues Tyr27, Ala58–Glu60, and Cys87–Ile89 each bind 5-amino-6-(D-ribitylamino)uracil. A (2S)-2-hydroxy-3-oxobutyl phosphate-binding site is contributed by Glu92–Thr93. His95 acts as the Proton donor in catalysis. Asn120 provides a ligand contact to 5-amino-6-(D-ribitylamino)uracil. Arg134 serves as a coordination point for (2S)-2-hydroxy-3-oxobutyl phosphate.

It belongs to the DMRL synthase family.

The enzyme catalyses (2S)-2-hydroxy-3-oxobutyl phosphate + 5-amino-6-(D-ribitylamino)uracil = 6,7-dimethyl-8-(1-D-ribityl)lumazine + phosphate + 2 H2O + H(+). It participates in cofactor biosynthesis; riboflavin biosynthesis; riboflavin from 2-hydroxy-3-oxobutyl phosphate and 5-amino-6-(D-ribitylamino)uracil: step 1/2. Functionally, catalyzes the formation of 6,7-dimethyl-8-ribityllumazine by condensation of 5-amino-6-(D-ribitylamino)uracil with 3,4-dihydroxy-2-butanone 4-phosphate. This is the penultimate step in the biosynthesis of riboflavin. The sequence is that of 6,7-dimethyl-8-ribityllumazine synthase from Azorhizobium caulinodans (strain ATCC 43989 / DSM 5975 / JCM 20966 / LMG 6465 / NBRC 14845 / NCIMB 13405 / ORS 571).